A 441-amino-acid chain; its full sequence is MMEGVRRAVAKFLRGGGVYEKAVDAFVKDLQRELIKADVNVKLVLNVTRRIKERALKEEPPPGVTRRDWMIKIVYEELVKLFGGDQEPQVDPPKTPWIVLLVGVQGSGKTTTAGKLAYYYVRRGYKVGLVSSDTHRPGAYEQLKRLAEEAGAMFYGEREGDPAEIARRGLEDLLSRGAEIVIVDTAGRHGHGEEARLLDEMKAIASKVRPDEVALVIDASIGQKAMGLAERFHKSTPIGSIIVTKMDGTARGGGALTAAAVTGARIKFIGTGETLGELEPFAPRRFVARILGMGDLESLLERIKSLEEAGELDRAAEDVLKGRITMRTIYRQLRAMRKLGPLGKVLQMLPGASMLASIDEGALKLGEEKMKRWMAIIESMTYEELDRPEIIDKRRMRRIAIGSGTSVDDVRELLVYYKNLKTMMKKLKRDKRLLRRLGMEL.

GTP-binding positions include 103–110, 184–188, and 244–247; these read GVQGSGKT, DTAGR, and TKMD.

This sequence belongs to the GTP-binding SRP family. SRP54 subfamily. In terms of assembly, part of the signal recognition particle protein translocation system, which is composed of SRP and FtsY. Archaeal SRP consists of a 7S RNA molecule of 300 nucleotides and two protein subunits: SRP54 and SRP19.

It localises to the cytoplasm. The catalysed reaction is GTP + H2O = GDP + phosphate + H(+). Functionally, involved in targeting and insertion of nascent membrane proteins into the cytoplasmic membrane. Binds to the hydrophobic signal sequence of the ribosome-nascent chain (RNC) as it emerges from the ribosomes. The SRP-RNC complex is then targeted to the cytoplasmic membrane where it interacts with the SRP receptor FtsY. This Aeropyrum pernix (strain ATCC 700893 / DSM 11879 / JCM 9820 / NBRC 100138 / K1) protein is Signal recognition particle 54 kDa protein.